The primary structure comprises 351 residues: Homoserine O-acetyltransferase (351 aa).

The AB hydrolase-1 domain occupies 51–334 (VIWVLHALTG…IYGHDAFLIE (284 aa)). The active-site Nucleophile is the S146. R212 is a binding site for substrate. Active-site residues include D299 and H328. D329 is a binding site for substrate.

Belongs to the AB hydrolase superfamily. MetX family. Homodimer.

Its subcellular location is the cytoplasm. The catalysed reaction is L-homoserine + acetyl-CoA = O-acetyl-L-homoserine + CoA. Its pathway is amino-acid biosynthesis; L-methionine biosynthesis via de novo pathway; O-acetyl-L-homoserine from L-homoserine: step 1/1. Transfers an acetyl group from acetyl-CoA to L-homoserine, forming acetyl-L-homoserine. This Cyclobacterium marinum (strain ATCC 25205 / DSM 745 / LMG 13164 / NCIMB 1802) (Flectobacillus marinus) protein is Homoserine O-acetyltransferase.